The following is a 308-amino-acid chain: Ornithine carbamoyltransferase (308 aa).

Carbamoyl phosphate contacts are provided by residues 56-59 (STRT), Gln83, Arg107, and 134-137 (HPCQ). L-ornithine is bound by residues Asn165, Asp225, and 229–230 (SM). Carbamoyl phosphate contacts are provided by residues 266–267 (CL) and Arg294.

Belongs to the aspartate/ornithine carbamoyltransferase superfamily. OTCase family.

The protein localises to the cytoplasm. It carries out the reaction carbamoyl phosphate + L-ornithine = L-citrulline + phosphate + H(+). It participates in amino-acid biosynthesis; L-arginine biosynthesis; L-arginine from L-ornithine and carbamoyl phosphate: step 1/3. In terms of biological role, reversibly catalyzes the transfer of the carbamoyl group from carbamoyl phosphate (CP) to the N(epsilon) atom of ornithine (ORN) to produce L-citrulline. The chain is Ornithine carbamoyltransferase from Cereibacter sphaeroides (strain ATCC 17023 / DSM 158 / JCM 6121 / CCUG 31486 / LMG 2827 / NBRC 12203 / NCIMB 8253 / ATH 2.4.1.) (Rhodobacter sphaeroides).